We begin with the raw amino-acid sequence, 274 residues long: Acyl-[acyl-carrier-protein]--UDP-N-acetylglucosamine O-acyltransferase (274 aa).

This sequence belongs to the transferase hexapeptide repeat family. LpxA subfamily. In terms of assembly, homotrimer.

The protein resides in the cytoplasm. It carries out the reaction a (3R)-hydroxyacyl-[ACP] + UDP-N-acetyl-alpha-D-glucosamine = a UDP-3-O-[(3R)-3-hydroxyacyl]-N-acetyl-alpha-D-glucosamine + holo-[ACP]. Its pathway is glycolipid biosynthesis; lipid IV(A) biosynthesis; lipid IV(A) from (3R)-3-hydroxytetradecanoyl-[acyl-carrier-protein] and UDP-N-acetyl-alpha-D-glucosamine: step 1/6. In terms of biological role, involved in the biosynthesis of lipid A, a phosphorylated glycolipid that anchors the lipopolysaccharide to the outer membrane of the cell. The chain is Acyl-[acyl-carrier-protein]--UDP-N-acetylglucosamine O-acyltransferase from Bartonella bacilliformis (strain ATCC 35685 / KC583 / Herrer 020/F12,63).